Reading from the N-terminus, the 576-residue chain is Apolipoprotein N-acyltransferase 1 (576 aa).

7 helical membrane-spanning segments follow: residues 15–35 (LILC…FSFF), 38–58 (GVFA…TSIW), 60–80 (AFLW…YWIP), 92–112 (FVSI…FFLF), 128–148 (YILL…FQIF), 168–188 (ICGV…FLIL), and 204–224 (IASL…IGYI). The CN hydrolase domain occupies 236 to 538 (LSVLMIQPDT…TGTRAFSIRL (303 aa)). Catalysis depends on Glu285, which acts as the Proton acceptor. Lys355 is an active-site residue. Cys446 (nucleophile) is an active-site residue. Residues 549-569 (FGNSFLWIFCILILISRLIFV) form a helical membrane-spanning segment.

This sequence belongs to the CN hydrolase family. Apolipoprotein N-acyltransferase subfamily.

It localises to the cell inner membrane. It catalyses the reaction N-terminal S-1,2-diacyl-sn-glyceryl-L-cysteinyl-[lipoprotein] + a glycerophospholipid = N-acyl-S-1,2-diacyl-sn-glyceryl-L-cysteinyl-[lipoprotein] + a 2-acyl-sn-glycero-3-phospholipid + H(+). It participates in protein modification; lipoprotein biosynthesis (N-acyl transfer). Its function is as follows. Catalyzes the phospholipid dependent N-acylation of the N-terminal cysteine of apolipoprotein, the last step in lipoprotein maturation. The chain is Apolipoprotein N-acyltransferase 1 from Leptospira interrogans serogroup Icterohaemorrhagiae serovar Lai (strain 56601).